A 228-amino-acid polypeptide reads, in one-letter code: Heptaprenylglyceryl phosphate synthase (228 aa).

K12 is a sn-glycerol 1-phosphate binding site. Mg(2+) is bound by residues D14 and T40. Residues 159–164 (YLEYSG), G189, and 209–210 (GN) contribute to the sn-glycerol 1-phosphate site.

The protein belongs to the GGGP/HepGP synthase family. Group I subfamily. As to quaternary structure, homodimer. The cofactor is Mg(2+).

It catalyses the reaction sn-glycerol 1-phosphate + all-trans-heptaprenyl diphosphate = 3-heptaprenyl-sn-glycero-1-phosphate + diphosphate. It participates in membrane lipid metabolism; glycerophospholipid metabolism. Functionally, prenyltransferase that catalyzes in vivo the transfer of the heptaprenyl moiety of heptaprenyl pyrophosphate (HepPP; 35 carbon atoms) to the C3 hydroxyl of sn-glycerol-1-phosphate (G1P), producing heptaprenylglyceryl phosphate (HepGP). This reaction is an ether-bond-formation step in the biosynthesis of archaea-type G1P-based membrane lipids found in Bacillales. The polypeptide is Heptaprenylglyceryl phosphate synthase (Geobacillus sp. (strain WCH70)).